The chain runs to 555 residues: Protein NRT1/ PTR FAMILY 5.12 (555 aa).

2 helical membrane passes run 53-73 (FAYFGIASNLITYFTEALGES) and 83-103 (LWLGTAAFLPLIWGSIADSFL). Thr108 is subject to Phosphothreonine. 10 consecutive transmembrane segments (helical) span residues 109-129 (ILLTSSFYIMGLGLLTFSATI), 148-168 (VIIFFCALYLIALGEGGFKVC), 190-210 (SYFNWLYFAISIGILTTRLVT), 221-241 (LGYAIPCLSMMLALFLFLLGI), 315-335 (AVLSLIPIWLCSLVFGIVFAQ), 357-377 (VPAATLQCFISLAILVFIPIY), 401-421 (ISTGIFLSIISMVIAALVEMK), 443-463 (VCWLIPQYILFGVSDVFTMVG), 482-502 (ALYLSIIGIGNFLSSFMVSVI), and 526-546 (YFYWLLACLSSLAFIFTVYFA).

This sequence belongs to the major facilitator superfamily. Proton-dependent oligopeptide transporter (POT/PTR) (TC 2.A.17) family. Expressed in shoots and roots.

It localises to the membrane. The protein is Protein NRT1/ PTR FAMILY 5.12 (NPF5.12) of Arabidopsis thaliana (Mouse-ear cress).